A 434-amino-acid chain; its full sequence is MTVTDIATRTYNHGWRLDPIVRSLLDTDFYKLLMLQMIREFYPNEHVTFSVINRSRHVRLAEAIDEGELRAQLDHARSIRFSKNELIWLAGNTFYGKTQMFSPDFIDWLATFRLGEYELRKVDGQYELHFHGPWTHTTMWEIPALAILNELRSRQVTKGQGRFALDVLYARAKAKLWAKVERLRKLDDLWLSDFGTRRRHGFLWQRWCVEAAKEGLGPAFTGTSNVLLAMDNDLEAIGTNAHELPMVAAALADDDTALRRAPYRILDQWRHTYGGNLLVALPDAFGTQAFLRDAPEWVADWTGFRPDSLPPIAAGEEIIKWWKQKSRDPREKLLVFSDGMDVDSIEETYHHFAGRVRVSFGWGTNLTNDFVGCSPDGTVDLDPISIVCKVTSVNGRPAVKLSDNPEKATGEPSEIERYLRVFGSAGRVRAPVHV.

Residue His-242 is modified to Phosphohistidine; by autocatalysis.

Belongs to the NAPRTase family. In terms of processing, transiently phosphorylated on a His residue during the reaction cycle. Phosphorylation strongly increases the affinity for substrates and increases the rate of nicotinate D-ribonucleotide production. Dephosphorylation regenerates the low-affinity form of the enzyme, leading to product release.

It catalyses the reaction nicotinate + 5-phospho-alpha-D-ribose 1-diphosphate + ATP + H2O = nicotinate beta-D-ribonucleotide + ADP + phosphate + diphosphate. The protein operates within cofactor biosynthesis; NAD(+) biosynthesis; nicotinate D-ribonucleotide from nicotinate: step 1/1. Catalyzes the synthesis of beta-nicotinate D-ribonucleotide from nicotinate and 5-phospho-D-ribose 1-phosphate at the expense of ATP. The sequence is that of Nicotinate phosphoribosyltransferase from Nitrobacter hamburgensis (strain DSM 10229 / NCIMB 13809 / X14).